The sequence spans 178 residues: Large ribosomal subunit protein uL6 (178 aa).

This sequence belongs to the universal ribosomal protein uL6 family. In terms of assembly, part of the 50S ribosomal subunit.

This protein binds to the 23S rRNA, and is important in its secondary structure. It is located near the subunit interface in the base of the L7/L12 stalk, and near the tRNA binding site of the peptidyltransferase center. The protein is Large ribosomal subunit protein uL6 of Geobacillus kaustophilus (strain HTA426).